Reading from the N-terminus, the 672-residue chain is COBRA-like protein 10 (672 aa).

A signal peptide spans Met1–Gly35. Residues Asn79, Asn135, Asn264, Asn328, Asn339, Asn368, Asn422, Asn442, Asn483, Asn562, Asn570, and Asn589 are each glycosylated (N-linked (GlcNAc...) asparagine). The CBM2 domain maps to Lys502–Ile607. Residue Ser646 is the site of GPI-anchor amidated serine attachment. A propeptide spans Ser647–Asp672 (removed in mature form). Residues Ile664 to Asp672 carry the Required for processing by the PIG complex, a critical step for apical plasma membrane localization in pollen tubes motif.

This sequence belongs to the COBRA family. In terms of processing, the GPI-anchor attachment at Ser-646 requires APTG1. In terms of tissue distribution, expressed in roots, stems, leaves, flowers and siliques. Specific expression in the pollen tube.

Its subcellular location is the cell membrane. The protein resides in the cytoplasm. It is found in the vesicle. Functionally, involved in the deposition of apical pectin cap and cellulose microfibrils in pollen tubes. Not essential for pollen development, hydration or germination, but required for pollen tubes growth in the female transmitting tract of pistil and toward micropyles, via the perception of ovule guidance cues. The polypeptide is COBRA-like protein 10 (Arabidopsis thaliana (Mouse-ear cress)).